Consider the following 424-residue polypeptide: GTPase Obg (424 aa).

Positions 1–158 constitute an Obg domain; it reads MFIDTAKIFV…RWIKLELKLL (158 aa). Residues 159–331 form the OBG-type G domain; that stretch reads ADVGLIGFPN…LMKEAARLLS (173 aa). GTP-binding positions include 165–172, 190–194, 212–215, 282–285, and 312–314; these read GFPNVGKS, FTTLK, DIPG, NKSD, and SAA. Positions 172 and 192 each coordinate Mg(2+). In terms of domain architecture, OCT spans 345 to 424; the sequence is RFIEEEKRFT…LNDFEFDFLL (80 aa).

Belongs to the TRAFAC class OBG-HflX-like GTPase superfamily. OBG GTPase family. In terms of assembly, monomer. Mg(2+) is required as a cofactor.

It localises to the cytoplasm. An essential GTPase which binds GTP, GDP and possibly (p)ppGpp with moderate affinity, with high nucleotide exchange rates and a fairly low GTP hydrolysis rate. Plays a role in control of the cell cycle, stress response, ribosome biogenesis and in those bacteria that undergo differentiation, in morphogenesis control. This chain is GTPase Obg, found in Clostridium botulinum (strain ATCC 19397 / Type A).